The sequence spans 371 residues: tRNA-specific 2-thiouridylase MnmA (371 aa).

ATP is bound by residues 9 to 16 (AMSGGVDS) and M35. C109 serves as the catalytic Nucleophile. A disulfide bridge connects residues C109 and C207. Residue G133 coordinates ATP. The tract at residues 157-159 (KDQ) is interaction with tRNA. The active-site Cysteine persulfide intermediate is C207.

This sequence belongs to the MnmA/TRMU family.

Its subcellular location is the cytoplasm. It carries out the reaction S-sulfanyl-L-cysteinyl-[protein] + uridine(34) in tRNA + AH2 + ATP = 2-thiouridine(34) in tRNA + L-cysteinyl-[protein] + A + AMP + diphosphate + H(+). Catalyzes the 2-thiolation of uridine at the wobble position (U34) of tRNA, leading to the formation of s(2)U34. The polypeptide is tRNA-specific 2-thiouridylase MnmA (Solibacter usitatus (strain Ellin6076)).